The sequence spans 163 residues: Nucleotide-binding protein KPK_4305 (163 aa).

The protein belongs to the YajQ family.

Its function is as follows. Nucleotide-binding protein. This chain is Nucleotide-binding protein KPK_4305, found in Klebsiella pneumoniae (strain 342).